A 362-amino-acid chain; its full sequence is Chemerin-like receptor 1 (362 aa).

Topologically, residues 1–37 are extracellular; that stretch reads MEAEDYNASYEDYPDDVDPIVVLEELSPLEGRVVRIL. Asparagine 7 carries an N-linked (GlcNAc...) asparagine glycan. The chain crosses the membrane as a helical span at residues 38 to 58; that stretch reads LVAVYSVICLLGILGNGLVIV. Residues 59 to 70 lie on the Cytoplasmic side of the membrane; it reads MITCKMKRTVNT. The helical transmembrane segment at 71 to 91 threads the bilayer; sequence VWFLNLAVADFLFNVFLPVHI. Residues 92–108 lie on the Extracellular side of the membrane; that stretch reads AYAALDYHWVFGTAMCK. Cysteine 107 and cysteine 184 are oxidised to a cystine. A helical membrane pass occupies residues 109–129; it reads ISNFLLIHNMFTSVFLLTVIS. At 130–151 the chain is on the cytoplasmic side; sequence FDRCVSVLLPVWSQNHRSVRLA. The chain crosses the membrane as a helical span at residues 152–172; that stretch reads YTACLVIWVLAFFLSSPSLVF. The Extracellular segment spans residues 173–219; that stretch reads RDTARLHGKISCFNNFSLSAAVSSPWPAHPQVDPVGSGRHKVVTITR. N-linked (GlcNAc...) asparagine glycosylation is present at asparagine 187. Residues 220–240 traverse the membrane as a helical segment; it reads FLCGFLVPGLITTACYLTIVY. Residues 241–255 lie on the Cytoplasmic side of the membrane; it reads KLQRSRLAKTKKPFK. A helical membrane pass occupies residues 256-276; that stretch reads IILTIIVTFFLCWCPYHAFYL. Residues 277 to 281 are Extracellular-facing; that stretch reads LELRR. Residues 282 to 302 form a helical membrane-spanning segment; the sequence is GSVPPSVFSLGVPLATAIAIA. Topologically, residues 303 to 362 are cytoplasmic; it reads NSCMNPILYVFMGQDFKKFRVALFSRLVNALSEDTGHSSYPSHRSFTKMSSMNERETGML. Phosphoserine is present on serine 334. Positions 336–362 are disordered; the sequence is DTGHSSYPSHRSFTKMSSMNERETGML. The residue at position 337 (threonine 337) is a Phosphothreonine. The segment covering 339-354 has biased composition (polar residues); that stretch reads HSSYPSHRSFTKMSSM. Residues serine 344, serine 347, and serine 353 each carry the phosphoserine modification.

This sequence belongs to the chemokine-like receptor (CMKLR) family. As to expression, widely expressed in several tissues including adipose, muscle, liver and brain.

It localises to the cell membrane. In terms of biological role, receptor for the chemoattractant adipokine chemerin/RARRES2 and for the omega-3 fatty acid derived molecule resolvin E1. Interaction with RARRES2 initiates activation of G proteins G(i)/G(o) and beta-arrestin pathways inducing cellular responses via second messenger pathways such as intracellular calcium mobilization, phosphorylation of MAP kinases MAPK1/MAPK3 (ERK1/2), TYRO3, MAPK14/P38MAPK and PI3K leading to multifunctional effects, like, reduction of immune responses, enhancing of adipogenesis and angionesis. Resolvin E1 down-regulates cytokine production in macrophages by reducing the activation of MAPK1/3 (ERK1/2) and NF-kappa-B. Positively regulates adipogenesis and adipocyte metabolism. This chain is Chemerin-like receptor 1 (CMLKR1), found in Bos taurus (Bovine).